A 399-amino-acid chain; its full sequence is Argininosuccinate synthase (399 aa).

9–17 contacts ATP; it reads AYSGGLDTS. Tyr85 serves as a coordination point for L-citrulline. Residue Gly115 coordinates ATP. L-aspartate is bound by residues Thr117, Asn121, and Asp122. Asn121 lines the L-citrulline pocket. L-citrulline contacts are provided by Arg125, Ser173, Glu258, and Tyr270.

The protein belongs to the argininosuccinate synthase family. Type 1 subfamily. Homotetramer.

The protein resides in the cytoplasm. It catalyses the reaction L-citrulline + L-aspartate + ATP = 2-(N(omega)-L-arginino)succinate + AMP + diphosphate + H(+). It functions in the pathway amino-acid biosynthesis; L-arginine biosynthesis; L-arginine from L-ornithine and carbamoyl phosphate: step 2/3. In Streptococcus thermophilus (strain CNRZ 1066), this protein is Argininosuccinate synthase.